The following is a 265-amino-acid chain: NAD kinase (265 aa).

The active-site Proton acceptor is the D45. NAD(+) contacts are provided by residues 45 to 46 (DG), 122 to 123 (NE), R148, D150, 161 to 166 (TAYSKS), and A185.

It belongs to the NAD kinase family. The cofactor is a divalent metal cation.

It localises to the cytoplasm. The enzyme catalyses NAD(+) + ATP = ADP + NADP(+) + H(+). Its function is as follows. Involved in the regulation of the intracellular balance of NAD and NADP, and is a key enzyme in the biosynthesis of NADP. Catalyzes specifically the phosphorylation on 2'-hydroxyl of the adenosine moiety of NAD to yield NADP. This chain is NAD kinase, found in Lactobacillus delbrueckii subsp. bulgaricus (strain ATCC 11842 / DSM 20081 / BCRC 10696 / JCM 1002 / NBRC 13953 / NCIMB 11778 / NCTC 12712 / WDCM 00102 / Lb 14).